Consider the following 332-residue polypeptide: Phosphate acyltransferase (332 aa).

This sequence belongs to the PlsX family. In terms of assembly, homodimer. Probably interacts with PlsY.

It localises to the cytoplasm. It carries out the reaction a fatty acyl-[ACP] + phosphate = an acyl phosphate + holo-[ACP]. The protein operates within lipid metabolism; phospholipid metabolism. Catalyzes the reversible formation of acyl-phosphate (acyl-PO(4)) from acyl-[acyl-carrier-protein] (acyl-ACP). This enzyme utilizes acyl-ACP as fatty acyl donor, but not acyl-CoA. The chain is Phosphate acyltransferase from Sulfurimonas denitrificans (strain ATCC 33889 / DSM 1251) (Thiomicrospira denitrificans (strain ATCC 33889 / DSM 1251)).